We begin with the raw amino-acid sequence, 980 residues long: BEM1-interacting protein 1 (980 aa).

An SH3 domain is found at 13–77; the sequence is KSFPLYIAVN…PAVFTKRIAI (65 aa). Phosphoserine occurs at positions 104, 106, and 128. The disordered stretch occupies residues 139–163; it reads SGSVEQEVSKSPTRVPEVSTPQLQD. Positions 141-150 are enriched in polar residues; the sequence is SVEQEVSKSP. Threonine 151 and threonine 158 each carry phosphothreonine. Serine 209 bears the Phosphoserine mark. Positions 228 to 292 constitute an SAM domain; the sequence is WSPEEVTDYF…FKEIRNIKSA (65 aa). Disordered regions lie at residues 333–356 and 390–438; these read SKCNKLSSESSDRKSSSVTTELQR and IFES…KNKN. Phosphoserine occurs at positions 393 and 412. The span at 397 to 412 shows a compositional bias: pro residues; the sequence is APKPPSYPSPVQPPQS. The span at 415-438 shows a compositional bias: polar residues; that stretch reads FNNRYTNNNARFPPQTTYPPKNKN. 2 positions are modified to phosphoserine: serine 525 and serine 528. A disordered region spans residues 544–762; that stretch reads SSFDEEETKQ…AKKQQTSAFT (219 aa). The span at 573–582 shows a compositional bias: basic and acidic residues; that stretch reads HSRDASLSEM. Phosphoserine is present on residues serine 589, serine 590, and serine 593. 2 stretches are compositionally biased toward low complexity: residues 589-608 and 621-638; these read SSILSFFSSKSQSNPTSPTK and HSRSQSNSYSHARSQSYS. A phosphoserine mark is found at serine 644 and serine 655. Polar residues-rich tracts occupy residues 645–662 and 669–683; these read LVTSPLKTSLSPINSKSN and ETPTSSNNKEAVSQP. Over residues 687 to 703 the composition is skewed to basic residues; sequence KHKHKHKHKSKHKHKNS. Serine 735 carries the post-translational modification Phosphoserine. Positions 737 to 746 are enriched in polar residues; the sequence is SELTQKSTKS. The region spanning 776–895 is the PH domain; that stretch reads TADCSGWMSK…WLSAIIKATI (120 aa). Threonine 919 is subject to Phosphothreonine. The disordered stretch occupies residues 930-980; the sequence is LRDAEEEEGRDQFGWDDTQNKRNSNYPIEQDQFETSDYLESSAFEYPGGRL. Polar residues predominate over residues 950-968; it reads KRNSNYPIEQDQFETSDYL.

As to quaternary structure, interacts with BEM1.

It is found in the bud. The protein resides in the bud neck. Functions redundantly with BOI2 to promote the fusion of secretory vesicles with the plasma membrane at sites of polarized growth. This chain is BEM1-interacting protein 1, found in Saccharomyces cerevisiae (strain ATCC 204508 / S288c) (Baker's yeast).